The sequence spans 140 residues: MNINPLIYFSSSSSNSHRFVQKLEIPAFRIPINQSDSPLNITSPYILLTPSYGGGSTKGAVPPQVIRFLNIAENRAFIRGVIAAGNTNFGEAYGIAGRIISEKCRIPLLYRFELLGTEEDVQRVRQGIQRFWQHDSLENM.

The protein belongs to the NrdI family.

Functionally, probably involved in ribonucleotide reductase function. The chain is Protein NrdI from Photorhabdus laumondii subsp. laumondii (strain DSM 15139 / CIP 105565 / TT01) (Photorhabdus luminescens subsp. laumondii).